Consider the following 109-residue polypeptide: MSKAMGETLGRLEAVIHDRLAAGEAEASYVASLAAKGRGKIAQKLGEEAVEAVIAAVSEDDPALIGEASDLVFHLSILLAERGLTWDAIAAELDRRHGTSGHTEKAARA.

This sequence belongs to the PRA-PH family.

Its subcellular location is the cytoplasm. It catalyses the reaction 1-(5-phospho-beta-D-ribosyl)-ATP + H2O = 1-(5-phospho-beta-D-ribosyl)-5'-AMP + diphosphate + H(+). It participates in amino-acid biosynthesis; L-histidine biosynthesis; L-histidine from 5-phospho-alpha-D-ribose 1-diphosphate: step 2/9. This Sphingopyxis alaskensis (strain DSM 13593 / LMG 18877 / RB2256) (Sphingomonas alaskensis) protein is Phosphoribosyl-ATP pyrophosphatase.